The chain runs to 113 residues: Small ribosomal subunit protein bS16 (113 aa).

The interval 84 to 113 (PKPAYTEQPKKSAPKKRAQERAAAAAAAAA) is disordered.

It belongs to the bacterial ribosomal protein bS16 family.

The polypeptide is Small ribosomal subunit protein bS16 (Gluconacetobacter diazotrophicus (strain ATCC 49037 / DSM 5601 / CCUG 37298 / CIP 103539 / LMG 7603 / PAl5)).